We begin with the raw amino-acid sequence, 532 residues long: MVDLQPDEVAAVLKQQLAHLKTDTELEEVGTVLQVGDGVAHIYGLTKIQAGELVEFENGKKAIALNLEENSVGAVIFGDAEGIGEGSTAKRTKRIASIHVGEGMIGRVVNTLGEPIDGKGPIKGELYEMPLERKAPGVLYRQPVAEPLQTGIKAIDAMIPIGRGQRELIIGDRQTGKTTLAIDTILNQRTYFEQGNPVYCIYVAIGQKASTIASVMASLEKYGAMEYTTIVAAPAATAASLQYFAPFTGATIGEYFRDTGKPALVIYDDLSKQAVAYREVSLLLRRPPGREAYPGDVFYLHSRLLERAAKINANDDIAQQMNDLPPSLEGKVKGGGSLTALPIIETQNGDVSAYIPTNVISITDGQIFLESALFNAGIRPAINVGISVSRVGGAAQVKAMKKVAGTLKLDQAQFRELEAFSKFGSDLDVATQRTIDRGRKNQEILKQGLHHPLTLEEQVCILYASTNGYLDKISLSQVTEFEKSYLSLLKSQHKGVLAKIAAGEWSDGIAQVLAEEAKNLAQLYVNDTSINS.

171 to 178 (GDRQTGKT) lines the ATP pocket.

It belongs to the ATPase alpha/beta chains family. In terms of assembly, F-type ATPases have 2 components, CF(1) - the catalytic core - and CF(0) - the membrane proton channel. CF(1) has five subunits: alpha(3), beta(3), gamma(1), delta(1), epsilon(1). CF(0) has three main subunits: a(1), b(2) and c(9-12). The alpha and beta chains form an alternating ring which encloses part of the gamma chain. CF(1) is attached to CF(0) by a central stalk formed by the gamma and epsilon chains, while a peripheral stalk is formed by the delta and b chains.

The protein localises to the cell membrane. The catalysed reaction is ATP + H2O + 4 H(+)(in) = ADP + phosphate + 5 H(+)(out). Produces ATP from ADP in the presence of a proton gradient across the membrane. The alpha chain is a regulatory subunit. The sequence is that of ATP synthase subunit alpha from Amoebophilus asiaticus (strain 5a2).